A 322-amino-acid chain; its full sequence is Undecaprenyl-phosphate 4-deoxy-4-formamido-L-arabinose transferase (322 aa).

The Cytoplasmic segment spans residues 1-235 (MFEIHPVKKV…TCLTTTPLRM (235 aa)). A helical membrane pass occupies residues 236-256 (LSLLGSIIAIGGFSIAVLLVI). Over 257-269 (LRLTFGPQWAAEG) the chain is Periplasmic. Residues 270 to 290 (VFMLFAVLFTFIGAQFIGMGL) form a helical membrane-spanning segment. The Cytoplasmic segment spans residues 291–322 (LGEYIGRIYTDVRARPRYFVQQVIRPSSKENE).

Belongs to the glycosyltransferase 2 family.

The protein resides in the cell inner membrane. It catalyses the reaction UDP-4-deoxy-4-formamido-beta-L-arabinose + di-trans,octa-cis-undecaprenyl phosphate = 4-deoxy-4-formamido-alpha-L-arabinopyranosyl di-trans,octa-cis-undecaprenyl phosphate + UDP. The protein operates within glycolipid biosynthesis; 4-amino-4-deoxy-alpha-L-arabinose undecaprenyl phosphate biosynthesis; 4-amino-4-deoxy-alpha-L-arabinose undecaprenyl phosphate from UDP-4-deoxy-4-formamido-beta-L-arabinose and undecaprenyl phosphate: step 1/2. It participates in bacterial outer membrane biogenesis; lipopolysaccharide biosynthesis. In terms of biological role, catalyzes the transfer of 4-deoxy-4-formamido-L-arabinose from UDP to undecaprenyl phosphate. The modified arabinose is attached to lipid A and is required for resistance to polymyxin and cationic antimicrobial peptides. This chain is Undecaprenyl-phosphate 4-deoxy-4-formamido-L-arabinose transferase, found in Shigella dysenteriae serotype 1 (strain Sd197).